The primary structure comprises 862 residues: Pentatricopeptide repeat-containing protein At1g74850, chloroplastic (862 aa).

The N-terminal 66 residues, 1 to 66 (MNLAIPNPNS…DLVLGNPSVS (66 aa)), are a transit peptide targeting the chloroplast. PPR repeat units lie at residues 104–139 (SLND…WCKP), 140–174 (NEHI…GVSR), 175–209 (SVFS…KISP), 210–245 (SILT…GIQP), 246–280 (DIVT…GIVP), 281–315 (DLTT…GSLP), 316–350 (DITS…GCTP), 351–385 (NANT…NTDP), 386–420 (DAAT…NIEP), 421–455 (DMET…DIVP), 456–490 (SSKA…GSNP), 491–525 (SIET…GIPR), 526–560 (NRDT…RCDP), 561–595 (DERT…DILP), and 596–630 (SIMC…RVSN). Positions 713–801 (VDVHRMSEGG…RIMCQRSQLK (89 aa)) constitute a Smr domain. The interval 831–862 (GTRASTSSDTNHSGNPTQRRTRTKKELAGSTA) is disordered. The span at 833–848 (RASTSSDTNHSGNPTQ) shows a compositional bias: polar residues.

The protein belongs to the PPR family. P subfamily. In terms of tissue distribution, mostly expressed in leaves, stems and flowers, but barely in roots.

The protein resides in the plastid. It is found in the chloroplast. Functionally, involved in plastid gene expression. The protein is Pentatricopeptide repeat-containing protein At1g74850, chloroplastic (PTAC2) of Arabidopsis thaliana (Mouse-ear cress).